The chain runs to 478 residues: Probable cytosolic Fe-S cluster assembly factor AGAP009023 (478 aa).

[4Fe-4S] cluster-binding residues include C23, C69, C72, C75, C189, C245, C396, and C400.

This sequence belongs to the NARF family.

In terms of biological role, component of the cytosolic iron-sulfur (Fe/S) protein assembly machinery. Required for maturation of extramitochondrial Fe/S proteins. This Anopheles gambiae (African malaria mosquito) protein is Probable cytosolic Fe-S cluster assembly factor AGAP009023.